Reading from the N-terminus, the 170-residue chain is Flavodoxin (170 aa).

Positions isoleucine 4–lysine 165 constitute a Flavodoxin-like domain.

This sequence belongs to the flavodoxin family. Requires FMN as cofactor.

In terms of biological role, low-potential electron donor to a number of redox enzymes. The polypeptide is Flavodoxin (isiB) (Synechocystis sp. (strain ATCC 27184 / PCC 6803 / Kazusa)).